Consider the following 467-residue polypeptide: Ribosomal protein uS12 methylthiotransferase RimO (467 aa).

The tract at residues 1-27 is disordered; sequence MTSNPPDLRPDLAPKPTFGTAPRPDQP. An MTTase N-terminal domain is found at 27 to 137; sequence PTLGMVSLGC…VLDAVHAAVP (111 aa). [4Fe-4S] cluster is bound by residues C36, C72, C101, C168, C172, and C175. The Radical SAM core domain occupies 154–397; sequence LTPRHFSYLK…MEKAQAISEA (244 aa). In terms of domain architecture, TRAM spans 400–467; that stretch reads ASKVGQTLQV…GEYDLWGALR (68 aa).

The protein belongs to the methylthiotransferase family. RimO subfamily. The cofactor is [4Fe-4S] cluster.

It is found in the cytoplasm. It catalyses the reaction L-aspartate(89)-[ribosomal protein uS12]-hydrogen + (sulfur carrier)-SH + AH2 + 2 S-adenosyl-L-methionine = 3-methylsulfanyl-L-aspartate(89)-[ribosomal protein uS12]-hydrogen + (sulfur carrier)-H + 5'-deoxyadenosine + L-methionine + A + S-adenosyl-L-homocysteine + 2 H(+). In terms of biological role, catalyzes the methylthiolation of an aspartic acid residue of ribosomal protein uS12. This chain is Ribosomal protein uS12 methylthiotransferase RimO, found in Ruegeria sp. (strain TM1040) (Silicibacter sp.).